Reading from the N-terminus, the 208-residue chain is MARYIGPSCKLARREGADLSLKSPSRALDSKCKLEQRPGQHGAVRKSKLSDYASQLREKQKVKRIYGVLERQFRNYYKNASTKKGNTGENLLQLLETRLDNVIYRMGFAVTRPAARQLVSHRSVLVNGKMVNLPSYHVKPGDVVALSQRAQKYLCVQESLTIKDQHGSAFSWIEVDSEKFSGVFKALPDRADLPSDINEALIVELYSK.

Residues 97-158 (TRLDNVIYRM…RAQKYLCVQE (62 aa)) enclose the S4 RNA-binding domain.

The protein belongs to the universal ribosomal protein uS4 family. In terms of assembly, part of the 30S ribosomal subunit. Contacts protein S5. The interaction surface between S4 and S5 is involved in control of translational fidelity.

Functionally, one of the primary rRNA binding proteins, it binds directly to 16S rRNA where it nucleates assembly of the body of the 30S subunit. Its function is as follows. With S5 and S12 plays an important role in translational accuracy. This is Small ribosomal subunit protein uS4 from Xylella fastidiosa (strain M23).